The primary structure comprises 526 residues: Bifunctional purine biosynthesis protein PurH (526 aa).

The 148-residue stretch at 1-148 folds into the MGS-like domain; it reads MQRPIIIRRA…KNYSNVVVVV (148 aa).

This sequence belongs to the PurH family.

It carries out the reaction (6R)-10-formyltetrahydrofolate + 5-amino-1-(5-phospho-beta-D-ribosyl)imidazole-4-carboxamide = 5-formamido-1-(5-phospho-D-ribosyl)imidazole-4-carboxamide + (6S)-5,6,7,8-tetrahydrofolate. The catalysed reaction is IMP + H2O = 5-formamido-1-(5-phospho-D-ribosyl)imidazole-4-carboxamide. It functions in the pathway purine metabolism; IMP biosynthesis via de novo pathway; 5-formamido-1-(5-phospho-D-ribosyl)imidazole-4-carboxamide from 5-amino-1-(5-phospho-D-ribosyl)imidazole-4-carboxamide (10-formyl THF route): step 1/1. The protein operates within purine metabolism; IMP biosynthesis via de novo pathway; IMP from 5-formamido-1-(5-phospho-D-ribosyl)imidazole-4-carboxamide: step 1/1. In Baumannia cicadellinicola subsp. Homalodisca coagulata, this protein is Bifunctional purine biosynthesis protein PurH.